The primary structure comprises 135 residues: Large ribosomal subunit protein uL16c (135 aa).

Residues 1-17 (MLSPKRTRFRKQHRGRM) are compositionally biased toward basic residues. A disordered region spans residues 1–21 (MLSPKRTRFRKQHRGRMKGVS).

Belongs to the universal ribosomal protein uL16 family. As to quaternary structure, part of the 50S ribosomal subunit.

The protein resides in the plastid. It is found in the chloroplast. The chain is Large ribosomal subunit protein uL16c from Amborella trichopoda.